The sequence spans 83 residues: MTINFDTATQTLEAEGLRCPEPVMMVRKTIRKMEDGETLLIKADDPSTTRDIPSFCRFMDHELIAEDTDSLPYRYLIRKGLSK.

Cys-19 serves as the catalytic Cysteine persulfide intermediate.

This sequence belongs to the sulfur carrier protein TusA family.

It localises to the cytoplasm. Sulfur carrier protein which probably makes part of a sulfur-relay system. The sequence is that of Sulfur carrier protein TusA from Aliivibrio fischeri (strain ATCC 700601 / ES114) (Vibrio fischeri).